The chain runs to 661 residues: UvrABC system protein B (661 aa).

A Helicase ATP-binding domain is found at 28–414 (KGVKEGKRHQ…HTDEMIEQII (387 aa)). Residue 41-48 (GATGTGKT) participates in ATP binding. The Beta-hairpin signature appears at 94-117 (YYDYYQPEAYVPSTDTFIEKDASI). Positions 432-598 (QIDDLLSEIQ…TINKKIHDVI (167 aa)) constitute a Helicase C-terminal domain. Positions 604-625 (NDETNEKQQTELPKKMTKKERQ) are disordered. Over residues 607–617 (TNEKQQTELPK) the composition is skewed to basic and acidic residues. One can recognise a UVR domain in the interval 625–660 (QKTIENIEKEMKKAAKDLDFEKATELRDMLFELKSE).

Belongs to the UvrB family. As to quaternary structure, forms a heterotetramer with UvrA during the search for lesions. Interacts with UvrC in an incision complex.

The protein localises to the cytoplasm. Its function is as follows. The UvrABC repair system catalyzes the recognition and processing of DNA lesions. A damage recognition complex composed of 2 UvrA and 2 UvrB subunits scans DNA for abnormalities. Upon binding of the UvrA(2)B(2) complex to a putative damaged site, the DNA wraps around one UvrB monomer. DNA wrap is dependent on ATP binding by UvrB and probably causes local melting of the DNA helix, facilitating insertion of UvrB beta-hairpin between the DNA strands. Then UvrB probes one DNA strand for the presence of a lesion. If a lesion is found the UvrA subunits dissociate and the UvrB-DNA preincision complex is formed. This complex is subsequently bound by UvrC and the second UvrB is released. If no lesion is found, the DNA wraps around the other UvrB subunit that will check the other stand for damage. The polypeptide is UvrABC system protein B (Staphylococcus haemolyticus (strain JCSC1435)).